A 218-amino-acid chain; its full sequence is Small ribosomal subunit protein uS3c (218 aa).

The KH type-2 domain occupies 43–118 (IKDYVKKNKK…RLNIAITRIE (76 aa)).

This sequence belongs to the universal ribosomal protein uS3 family. In terms of assembly, part of the 30S ribosomal subunit.

It localises to the plastid. It is found in the chloroplast. This Phalaenopsis aphrodite subsp. formosana (Moth orchid) protein is Small ribosomal subunit protein uS3c (rps3).